Reading from the N-terminus, the 531-residue chain is Zinc finger protein 837 (531 aa).

The interval 1–101 is disordered; sequence MEAPAQKAGQ…CGPTSSQNPE (101 aa). Over residues 24–50 the composition is skewed to basic and acidic residues; it reads AREKRPEEPRPLEEDRAGSRPTQKGDL. 8 consecutive C2H2-type zinc fingers follow at residues 271 to 293, 299 to 321, 363 to 385, 391 to 413, 419 to 441, 447 to 469, 475 to 497, and 503 to 525; these read YACD…QRIH, YECA…QKTH, YECA…RRVH, YACP…QRTH, YACP…QRAH, YGCS…ERLH, YICR…LRTH, and YACG…RKRH.

It belongs to the krueppel C2H2-type zinc-finger protein family.

It localises to the nucleus. Functionally, may be involved in transcriptional regulation. The protein is Zinc finger protein 837 (ZNF837) of Homo sapiens (Human).